A 330-amino-acid chain; its full sequence is Glycerol-3-phosphate dehydrogenase [NAD(P)+] (330 aa).

3 residues coordinate NADPH: W11, R33, and K105. Sn-glycerol 3-phosphate is bound by residues K105, G133, and S135. Position 137 (A137) interacts with NADPH. 5 residues coordinate sn-glycerol 3-phosphate: K188, D241, S251, R252, and N253. K188 functions as the Proton acceptor in the catalytic mechanism. An NADPH-binding site is contributed by R252. V276 and E278 together coordinate NADPH.

This sequence belongs to the NAD-dependent glycerol-3-phosphate dehydrogenase family.

It localises to the cytoplasm. It carries out the reaction sn-glycerol 3-phosphate + NAD(+) = dihydroxyacetone phosphate + NADH + H(+). The enzyme catalyses sn-glycerol 3-phosphate + NADP(+) = dihydroxyacetone phosphate + NADPH + H(+). It participates in membrane lipid metabolism; glycerophospholipid metabolism. Its function is as follows. Catalyzes the reduction of the glycolytic intermediate dihydroxyacetone phosphate (DHAP) to sn-glycerol 3-phosphate (G3P), the key precursor for phospholipid synthesis. The protein is Glycerol-3-phosphate dehydrogenase [NAD(P)+] of Acidovorax ebreus (strain TPSY) (Diaphorobacter sp. (strain TPSY)).